The sequence spans 105 residues: Vacuolar ATPase assembly integral membrane protein VMA21 homolog (105 aa).

A disordered region spans residues 1 to 26 (MSTKNKKAAGGNGGAPKQTRQQSHDS). The Cytoplasmic portion of the chain corresponds to 1 to 36 (MSTKNKKAAGGNGGAPKQTRQQSHDSQDYSSFKTVL). Residues 37-57 (FYCMLIVFLPVLTFFVLKGFV) traverse the membrane as a helical segment. Residues 58–68 (LDQFLDISEVK) are Lumenal-facing. Residues 69 to 89 (VNIASAVGAVVALHVALGLYI) traverse the membrane as a helical segment. At 90-105 (YRAYFGAPGSKASKTD) the chain is on the cytoplasmic side.

It belongs to the VMA21 family.

It localises to the endoplasmic reticulum membrane. Its subcellular location is the endoplasmic reticulum-Golgi intermediate compartment membrane. The protein resides in the cytoplasmic vesicle. It is found in the COPII-coated vesicle membrane. In terms of biological role, required for the assembly of the V0 complex of the vacuolar ATPase (V-ATPase) in the endoplasmic reticulum. The chain is Vacuolar ATPase assembly integral membrane protein VMA21 homolog from Drosophila yakuba (Fruit fly).